Consider the following 528-residue polypeptide: Lanosterol 14-alpha demethylase (528 aa).

A helical membrane pass occupies residues 15-37 (LSLSVTQQISILLGVPFVYNLVW). Tyr64 contacts oteseconazole. Residue Tyr118 participates in itraconazole binding. Residue Gly307 coordinates posaconazole. Residue His377 coordinates oteseconazole. Cys470 provides a ligand contact to heme.

The protein belongs to the cytochrome P450 family. The cofactor is heme.

The protein localises to the endoplasmic reticulum membrane. It carries out the reaction a 14alpha-methyl steroid + 3 reduced [NADPH--hemoprotein reductase] + 3 O2 = a Delta(14) steroid + formate + 3 oxidized [NADPH--hemoprotein reductase] + 4 H2O + 4 H(+). The enzyme catalyses a 14alpha-methyl steroid + reduced [NADPH--hemoprotein reductase] + O2 = a 14alpha-hydroxymethyl steroid + oxidized [NADPH--hemoprotein reductase] + H2O + H(+). It catalyses the reaction a 14alpha-hydroxymethyl steroid + reduced [NADPH--hemoprotein reductase] + O2 = a 14alpha-formyl steroid + oxidized [NADPH--hemoprotein reductase] + 2 H2O + H(+). The catalysed reaction is a 14alpha-formyl steroid + reduced [NADPH--hemoprotein reductase] + O2 = a Delta(14) steroid + formate + oxidized [NADPH--hemoprotein reductase] + H2O + 2 H(+). It carries out the reaction lanosterol + 3 reduced [NADPH--hemoprotein reductase] + 3 O2 = 4,4-dimethyl-5alpha-cholesta-8,14,24-trien-3beta-ol + formate + 3 oxidized [NADPH--hemoprotein reductase] + 4 H2O + 4 H(+). The enzyme catalyses lanosterol + reduced [NADPH--hemoprotein reductase] + O2 = 32-hydroxylanosterol + oxidized [NADPH--hemoprotein reductase] + H2O + H(+). It catalyses the reaction 32-hydroxylanosterol + reduced [NADPH--hemoprotein reductase] + O2 = 32-oxolanosterol + oxidized [NADPH--hemoprotein reductase] + 2 H2O + H(+). The catalysed reaction is 32-oxolanosterol + reduced [NADPH--hemoprotein reductase] + O2 = 4,4-dimethyl-5alpha-cholesta-8,14,24-trien-3beta-ol + formate + oxidized [NADPH--hemoprotein reductase] + H2O + 2 H(+). It carries out the reaction eburicol + 3 reduced [NADPH--hemoprotein reductase] + 3 O2 = 14-demethyleburicol + formate + 3 oxidized [NADPH--hemoprotein reductase] + 4 H2O + 4 H(+). The enzyme catalyses eburicol + reduced [NADPH--hemoprotein reductase] + O2 = 32-hydroxyeburicol + oxidized [NADPH--hemoprotein reductase] + H2O + H(+). It catalyses the reaction 32-hydroxyeburicol + reduced [NADPH--hemoprotein reductase] + O2 = 32-oxoeburicol + oxidized [NADPH--hemoprotein reductase] + 2 H2O + H(+). The catalysed reaction is 32-oxoeburicol + reduced [NADPH--hemoprotein reductase] + O2 = 14-demethyleburicol + formate + oxidized [NADPH--hemoprotein reductase] + H2O + 2 H(+). The protein operates within steroid biosynthesis; zymosterol biosynthesis; zymosterol from lanosterol: step 1/6. With respect to regulation, the catalytic activity is inhibited by the binding of azoles clotrimazole, miconazole, fluconazole, ketoconazole, oteseconazole (VT-1161), tetraconazole, the triazole SCH39304, and the triazole derivative ICI 153066. Its function is as follows. Sterol 14alpha-demethylase that plays a critical role in the third module of ergosterol biosynthesis pathway, being ergosterol the major sterol component in fungal membranes that participates in a variety of functions. The third module or late pathway involves the ergosterol synthesis itself through consecutive reactions that mainly occur in the endoplasmic reticulum (ER) membrane. In filamentous fungi, during the initial step of this module, lanosterol (lanosta-8,24-dien-3beta-ol) can be metabolized to eburicol. Sterol 14alpha-demethylase catalyzes the three-step oxidative removal of the 14alpha-methyl group (C-32) of both these sterols in the form of formate, and converts eburicol and lanosterol to 14-demethyleburicol (4,4,24-trimethylergosta-8,14,24(28)-trienol) and 4,4-dimethyl-5alpha-cholesta-8,14,24-trien-3beta-ol, respectively, which are further metabolized by other enzymes in the pathway to ergosterol. Can also use substrates not intrinsic to fungi, such as 24,25-dihydrolanosterol (DHL), producing 4,4-dimethyl-8,14-cholestadien-3-beta-ol, but at lower rates than the endogenous substrates. The sequence is that of Lanosterol 14-alpha demethylase from Candida albicans (strain SC5314 / ATCC MYA-2876) (Yeast).